A 372-amino-acid polypeptide reads, in one-letter code: GDP-mannose 4,6 dehydratase (372 aa).

Residues 1–20 (MAHAPARCPSARGSGDGEMG) form a disordered region. Alanine 2 bears the N-acetylalanine mark. NADP(+) contacts are provided by residues 30–35 (GITGQD), 55–58 (RRSS), 86–87 (DL), 108–112 (LGAQS), and tyrosine 123. Threonine 155 is an active-site residue. Residues glutamate 157 and tyrosine 179 each act as nucleophile in the active site. Positions 183, 209, and 214 each coordinate NADP(+). Tyrosine 323 is modified (phosphotyrosine).

This sequence belongs to the NAD(P)-dependent epimerase/dehydratase family. GDP-mannose 4,6-dehydratase subfamily. Requires NADP(+) as cofactor. Highly expressed in pancreas and small intestine. Expressed in thymus, protstate, colon, heart, placenta, liver and kidney. Expressed at low levels in spleen, testis, brain and lung.

The enzyme catalyses GDP-alpha-D-mannose = GDP-4-dehydro-alpha-D-rhamnose + H2O. It participates in nucleotide-sugar biosynthesis; GDP-L-fucose biosynthesis via de novo pathway; GDP-L-fucose from GDP-alpha-D-mannose: step 1/2. With respect to regulation, inhibited by GDP-fucose. Catalyzes the conversion of GDP-D-mannose to GDP-4-dehydro-6-deoxy-D-mannose. This Homo sapiens (Human) protein is GDP-mannose 4,6 dehydratase.